We begin with the raw amino-acid sequence, 1235 residues long: DNA polymerase catalytic subunit (1235 aa).

2 disordered regions span residues 640-693 (QGRF…AGRH) and 1098-1134 (AAAPGDEPAPPAALPSPAKRPRETPSHADPPGGASKP). Residues 650–661 (APKRPAAAREDE) show a composition bias toward basic and acidic residues. Residues 662–675 (ERPEEEGEDEDERE) are compositionally biased toward acidic residues. Basic and acidic residues predominate over residues 676-691 (EGGGEREPEGARETAG).

This sequence belongs to the DNA polymerase type-B family. As to quaternary structure, forms a complex with the ssDNA-binding protein UL29, the DNA polymerase processivity factor, and the alkaline exonuclease. Interacts with the putative helicase-primase complex subunit UL8; this interaction may coordinate leading and lagging strand DNA synthesis at the replication fork.

The protein localises to the host nucleus. The catalysed reaction is DNA(n) + a 2'-deoxyribonucleoside 5'-triphosphate = DNA(n+1) + diphosphate. It catalyses the reaction Endonucleolytic cleavage to 5'-phosphomonoester.. Its function is as follows. Replicates viral genomic DNA. The replication complex is composed of six viral proteins: the DNA polymerase, processivity factor, primase, primase-associated factor, helicase, and ssDNA-binding protein. Additionally, the polymerase contains an intrinsic ribonuclease H (RNase H) activity that specifically degrades RNA/DNA heteroduplexes or duplex DNA substrates in the 5' to 3' direction. Therefore, it can catalyze the excision of the RNA primers that initiate the synthesis of Okazaki fragments at a replication fork during viral DNA replication. The polypeptide is DNA polymerase catalytic subunit (Human herpesvirus 1 (strain KOS) (HHV-1)).